Consider the following 298-residue polypeptide: Probable 3-mercaptopyruvate sulfurtransferase (298 aa).

Residues 24–141 (NAQKTVLLDA…WKTEGLELET (118 aa)) enclose the Rhodanese 1 domain. The segment at 142–175 (GEPRTPKPVVYEGAKLNKDLVASFDDIVKVIESP) is hinge. Ser-164 is modified (phosphoserine). The Rhodanese 2 domain maps to 176–292 (DAAGVHIVDA…YGKRANEDSS (117 aa)). Arg-190 lines the substrate pocket. Residue Cys-252 is the Cysteine persulfide intermediate of the active site.

Its subcellular location is the mitochondrion. The enzyme catalyses 2-oxo-3-sulfanylpropanoate + [thioredoxin]-dithiol = [thioredoxin]-disulfide + hydrogen sulfide + pyruvate + H(+). Functionally, required for formation of the 2-thio group of the 5-methoxycarbonylmethyl-2-thiouridine modified base in some tRNAs. The chain is Probable 3-mercaptopyruvate sulfurtransferase (tum1) from Schizosaccharomyces pombe (strain 972 / ATCC 24843) (Fission yeast).